The chain runs to 376 residues: MSALLNITEPNNNTNSNDNDFLASLTTDAPQAIASKYSREQIAQLFDLPLMDLLLQAQTIHRQNFNANEVQISTLLSIKTGNCPEDCGYCSQSGHHRDKTKLVAEKRIEVDKVIAAAKRAKATGSSRFCMGAAWKHPSAKDMPYVVELVKEVKALGLETCMTLGMLDTDQAAQLADAGLDYYNHNLDTSRSYYEQVVSTRSYDERLDTITNVRNSGINVCSGNIVGMGESRDDRIDWVHELLKMPKAPESIPVNLLVPIQGTPIGDKVLAEGQLSVLEWIRTIAVTRICCPSSYVRLSAGRESLSDAEQALAFMAGANSFFYGDKLLTTGNASQSGDDRLMRELGLTKQFAAPRAPKQVPVIDAMSGHQSQVVLAS.

One can recognise a Radical SAM core domain in the interval 68–292 (NEVQISTLLS…IAVTRICCPS (225 aa)). 3 residues coordinate [4Fe-4S] cluster: Cys83, Cys87, and Cys90. [2Fe-2S] cluster is bound by residues Cys129, Cys160, Cys220, and Arg296.

It belongs to the radical SAM superfamily. Biotin synthase family. In terms of assembly, homodimer. [4Fe-4S] cluster is required as a cofactor. It depends on [2Fe-2S] cluster as a cofactor.

It catalyses the reaction (4R,5S)-dethiobiotin + (sulfur carrier)-SH + 2 reduced [2Fe-2S]-[ferredoxin] + 2 S-adenosyl-L-methionine = (sulfur carrier)-H + biotin + 2 5'-deoxyadenosine + 2 L-methionine + 2 oxidized [2Fe-2S]-[ferredoxin]. It functions in the pathway cofactor biosynthesis; biotin biosynthesis; biotin from 7,8-diaminononanoate: step 2/2. Catalyzes the conversion of dethiobiotin (DTB) to biotin by the insertion of a sulfur atom into dethiobiotin via a radical-based mechanism. The protein is Biotin synthase of Psychrobacter cryohalolentis (strain ATCC BAA-1226 / DSM 17306 / VKM B-2378 / K5).